A 401-amino-acid chain; its full sequence is Formate-dependent phosphoribosylglycinamide formyltransferase (401 aa).

N(1)-(5-phospho-beta-D-ribosyl)glycinamide contacts are provided by residues 27-28 (EL) and glutamate 87. ATP contacts are provided by residues arginine 119, lysine 160, 165–170 (SSGKGQ), 200–203 (EELV), and glutamate 208. An ATP-grasp domain is found at 124–313 (EFAAEEVGVT…QFDLHLRAIL (190 aa)). Positions 272 and 284 each coordinate Mg(2+). N(1)-(5-phospho-beta-D-ribosyl)glycinamide is bound by residues aspartate 291, lysine 361, and 368 to 369 (RR).

The protein belongs to the PurK/PurT family. Homodimer.

The enzyme catalyses N(1)-(5-phospho-beta-D-ribosyl)glycinamide + formate + ATP = N(2)-formyl-N(1)-(5-phospho-beta-D-ribosyl)glycinamide + ADP + phosphate + H(+). Its pathway is purine metabolism; IMP biosynthesis via de novo pathway; N(2)-formyl-N(1)-(5-phospho-D-ribosyl)glycinamide from N(1)-(5-phospho-D-ribosyl)glycinamide (formate route): step 1/1. Functionally, involved in the de novo purine biosynthesis. Catalyzes the transfer of formate to 5-phospho-ribosyl-glycinamide (GAR), producing 5-phospho-ribosyl-N-formylglycinamide (FGAR). Formate is provided by PurU via hydrolysis of 10-formyl-tetrahydrofolate. This is Formate-dependent phosphoribosylglycinamide formyltransferase from Haloquadratum walsbyi (strain DSM 16790 / HBSQ001).